A 1502-amino-acid chain; its full sequence is Heme-responsive zinc finger transcription factor HAP1 (1502 aa).

Over residues methionine 1–serine 50 the composition is skewed to polar residues. A disordered region spans residues methionine 1–lysine 56. 6 residues coordinate Zn(2+): cysteine 64, cysteine 67, cysteine 74, cysteine 81, cysteine 84, and cysteine 93. The zn(2)-C6 fungal-type DNA-binding region spans cysteine 64–cysteine 93. Residues glutamate 105–serine 134 adopt a coiled-coil conformation. The disordered stretch occupies residues lysine 126–asparagine 208. The segment covering lysine 130–serine 142 has biased composition (low complexity). 2 stretches are compositionally biased toward polar residues: residues tyrosine 143–phenylalanine 152 and threonine 160–histidine 176. Residues glutamine 177–asparagine 208 are compositionally biased toward low complexity. Residues lysine 244–serine 444 are heme-responsive; required for HMC formation. HRM repeat units follow at residues lysine 280 to histidine 285, lysine 299 to histidine 304, lysine 323 to histidine 328, arginine 347 to histidine 352, lysine 389 to histidine 394, and arginine 415 to histidine 420. Composition is skewed to polar residues over residues serine 432–histidine 447 and glutamine 706–leucine 734. Disordered regions lie at residues serine 432 to histidine 458 and glutamine 706 to glutamine 767. The segment covering asparagine 735–asparagine 759 has biased composition (low complexity). The HRM 7 repeat unit spans residues lysine 1192–glutamine 1197. The disordered stretch occupies residues threonine 1384–serine 1411. The segment covering aspartate 1388–serine 1411 has biased composition (polar residues).

As to quaternary structure, binds DNA as a homodimer. Interacts with SRO9 and YDJ1. In the absence of heme, binds to at least four cellular proteins, including YDJ1 and SRO9, forming a high-molecular-weight complex (HMC) which results in repression of its activity and dictates its DNA-binding specificity.

The protein localises to the nucleus. Its function is as follows. Regulation of oxygen dependent gene expression. It modulates the expression of Iso-1 (CYP1) and Iso-2 (CYP3) cytochrome c. In response to heme, promotes transcription of genes encoding functions required for respiration, controlling oxidative damage and repression of anaerobic genes. Binds to the sequence 5'-CGGNNNTNNCGG-3'. Is non-functional in terms of iso-1 cytochrome c expression in strain S288c and its derivatives. In Saccharomyces cerevisiae (strain ATCC 204508 / S288c) (Baker's yeast), this protein is Heme-responsive zinc finger transcription factor HAP1 (HAP1).